A 427-amino-acid chain; its full sequence is Trigger factor (427 aa).

The PPIase FKBP-type domain maps to glycine 163 to proline 248.

Belongs to the FKBP-type PPIase family. Tig subfamily.

Its subcellular location is the cytoplasm. The catalysed reaction is [protein]-peptidylproline (omega=180) = [protein]-peptidylproline (omega=0). Functionally, involved in protein export. Acts as a chaperone by maintaining the newly synthesized protein in an open conformation. Functions as a peptidyl-prolyl cis-trans isomerase. The polypeptide is Trigger factor (Streptococcus pneumoniae (strain ATCC 700669 / Spain 23F-1)).